The following is a 273-amino-acid chain: WIMGHMVNAIAQIDELVNLGANSIETDVSFDKNANPEYTYHGIPCDCGRTCTKSEKFNVFLQGLQKATTPGDSKYQEKLVLVVFDLKSSSLYDNQASDAGKKLAKSLLQNYWKNGNNGGRAYIVLSIPNLAHYKLITGFKETLKTEGHPELMEKVGYDFSGNDDIDQVAKAYKKAGVTGHVWQSDGITNCLPRGLDRVKQAVANRDSSNGFINKVYYWTVDKRSTTRGALDAGVDGIMTNYPDVIADVLSESAYKSKFRIATYEDNPWETFKN.

His5 is a catalytic residue. Mg(2+) is bound by residues Glu25 and Asp27. His41 (nucleophile) is an active-site residue. 2 cysteine pairs are disulfide-bonded: Cys45-Cys51 and Cys47-Cys190. Asp85 contributes to the Mg(2+) binding site.

It belongs to the arthropod phospholipase D family. Class II subfamily. Mg(2+) is required as a cofactor. Expressed by the venom gland.

The protein resides in the secreted. It catalyses the reaction an N-(acyl)-sphingosylphosphocholine = an N-(acyl)-sphingosyl-1,3-cyclic phosphate + choline. It carries out the reaction an N-(acyl)-sphingosylphosphoethanolamine = an N-(acyl)-sphingosyl-1,3-cyclic phosphate + ethanolamine. The enzyme catalyses a 1-acyl-sn-glycero-3-phosphocholine = a 1-acyl-sn-glycero-2,3-cyclic phosphate + choline. The catalysed reaction is a 1-acyl-sn-glycero-3-phosphoethanolamine = a 1-acyl-sn-glycero-2,3-cyclic phosphate + ethanolamine. Dermonecrotic toxins cleave the phosphodiester linkage between the phosphate and headgroup of certain phospholipids (sphingolipid and lysolipid substrates), forming an alcohol (often choline) and a cyclic phosphate. This toxin acts on sphingomyelin (SM). It may also act on ceramide phosphoethanolamine (CPE), lysophosphatidylcholine (LPC) and lysophosphatidylethanolamine (LPE), but not on lysophosphatidylserine (LPS), and lysophosphatidylglycerol (LPG). It acts by transphosphatidylation, releasing exclusively cyclic phosphate products as second products. Induces dermonecrosis, hemolysis, increased vascular permeability, edema, inflammatory response, and platelet aggregation. This is Dermonecrotic toxin LdSicTox-alphaIB3av from Loxosceles deserta (Desert recluse spider).